The primary structure comprises 598 residues: Chaperone protein DnaK (598 aa).

Position 180 is a phosphothreonine; by autocatalysis (Thr-180).

It belongs to the heat shock protein 70 family.

Acts as a chaperone. In Thermosipho africanus (strain TCF52B), this protein is Chaperone protein DnaK.